Here is a 434-residue protein sequence, read N- to C-terminus: Bcl-2-like protein 13 (434 aa).

A BH4 motif is present at residues 14–30; the sequence is ETKYVVLSYLGLLSQEK. Ser-35 bears the Phosphoserine mark. The BH3 signature appears at 97 to 113; that stretch reads IEDCLAHLGERVSQDLK. The short motif at 144–154 is the BH1 element; it reads ASGWNKLLVPL. The BH2 signature appears at 190–203; it reads FIIQQGGWGSVFSL. Positions 224-245 are disordered; it reads LPSDNSGQVSPPESPTVTTSWQ. A compositionally biased stretch (polar residues) spans 226 to 245; it reads SDNSGQVSPPESPTVTTSWQ. An A repeat occupies 243 to 253; the sequence is SWQSESLPVSL. A phosphoserine mark is found at Ser-256, Ser-258, Ser-300, Ser-343, Ser-347, Ser-377, and Ser-387. Residues 258–268 form an A; approximate repeat; it reads SWHTESLPVSL. A disordered region spans residues 282 to 303; sequence EVKSLDSSGAGEKSENNSSNSD. The interval 363–398 is disordered; that stretch reads RPEAVERAEGAAQLSEERAGSRKKSHTGEAAAVRGA. Positions 365–382 are enriched in basic and acidic residues; the sequence is EAVERAEGAAQLSEERAG. Residues 409-429 traverse the membrane as a helical segment; the sequence is VLLFGGAAAVAILAVAVGVAL.

Belongs to the Bcl-2 family. As to quaternary structure, monomer.

It is found in the mitochondrion membrane. Functionally, may promote the activation of caspase-3 and apoptosis. The polypeptide is Bcl-2-like protein 13 (Bcl2l13) (Mus musculus (Mouse)).